A 57-amino-acid chain; its full sequence is Small ribosomal subunit protein bS21 (57 aa).

This sequence belongs to the bacterial ribosomal protein bS21 family.

The protein is Small ribosomal subunit protein bS21 of Bacillus cytotoxicus (strain DSM 22905 / CIP 110041 / 391-98 / NVH 391-98).